A 41-amino-acid polypeptide reads, in one-letter code: MDWRVLIVLAPVIIAGSWALFNIGAAAIRQVQEFLNRDKLA.

The chain crosses the membrane as a helical span at residues 5–23 (VLIVLAPVIIAGSWALFNI).

Belongs to the PsbY family. As to quaternary structure, PSII is composed of 1 copy each of membrane proteins PsbA, PsbB, PsbC, PsbD, PsbE, PsbF, PsbH, PsbI, PsbJ, PsbK, PsbL, PsbM, PsbT, PsbX, PsbY, PsbZ, Psb30/Ycf12, peripheral proteins PsbO, CyanoQ (PsbQ), PsbU, PsbV and a large number of cofactors. It forms dimeric complexes.

It localises to the cellular thylakoid membrane. Loosely associated component of the core of photosystem II (PSII), it is not always seen in crystals. PSII is a light-driven water plastoquinone oxidoreductase, using light energy to abstract electrons from H(2)O, generating a proton gradient subsequently used for ATP formation. This is Photosystem II reaction center protein Y from Gloeothece citriformis (strain PCC 7424) (Cyanothece sp. (strain PCC 7424)).